A 321-amino-acid polypeptide reads, in one-letter code: Ribosomal RNA small subunit methyltransferase H (321 aa).

Residues 43 to 45, D63, F89, D110, and Q117 contribute to the S-adenosyl-L-methionine site; that span reads GGH. The disordered stretch occupies residues 286-321; it reads HPAGKALRAGPRETRDNPRSRSAVLRVAERSERHAA. Composition is skewed to basic and acidic residues over residues 295–304 and 312–321; these read GPRETRDNPR and VAERSERHAA.

Belongs to the methyltransferase superfamily. RsmH family.

It is found in the cytoplasm. The enzyme catalyses cytidine(1402) in 16S rRNA + S-adenosyl-L-methionine = N(4)-methylcytidine(1402) in 16S rRNA + S-adenosyl-L-homocysteine + H(+). Specifically methylates the N4 position of cytidine in position 1402 (C1402) of 16S rRNA. The sequence is that of Ribosomal RNA small subunit methyltransferase H from Acidithiobacillus ferrooxidans (strain ATCC 23270 / DSM 14882 / CIP 104768 / NCIMB 8455) (Ferrobacillus ferrooxidans (strain ATCC 23270)).